Consider the following 327-residue polypeptide: Phenylalanine--tRNA ligase alpha subunit (327 aa).

Glutamate 252 is a binding site for Mg(2+).

Belongs to the class-II aminoacyl-tRNA synthetase family. Phe-tRNA synthetase alpha subunit type 1 subfamily. As to quaternary structure, tetramer of two alpha and two beta subunits. It depends on Mg(2+) as a cofactor.

It localises to the cytoplasm. The catalysed reaction is tRNA(Phe) + L-phenylalanine + ATP = L-phenylalanyl-tRNA(Phe) + AMP + diphosphate + H(+). The sequence is that of Phenylalanine--tRNA ligase alpha subunit from Serratia proteamaculans (strain 568).